Here is a 1402-residue protein sequence, read N- to C-terminus: MNQEVMNLFNGQVPAQNFDSIRISIASPEKILSWSYGEIKKPETINYRTFKPERDGLFCARIFGPIKDYECLCGKYKRMKYKGIICEKCGVEVTLSRVRRERMGHIELAAPVAHIWFLKSLPSRISTLLDMTLKDVERVLYFENYIVTEPGLTALKEHQLLTEEEYMLAVDEYGEDQFTAMIGAEAIYEMLASMNLEKIAGDLRSELADTTSDLKQKKLMKRLKIVENFMESGNRPEWMIMKVVPVIPPDLRPLVPLDGGRFATSDLNDLYRRVINRNNRLKRLIELRAPGIIIRNEKRMLQESVDALFDNGRRGRVITGANKRPLKSLSDMLKGKQGRFRQNLLGKRVDYSGRSVIVTGPELKLHQCGLPKKMALELFKPFIYARLDAKGYSSTVKQAKKLVEKEKPEVWDILDEVIREHPVLLNRAPTLHRLGIQAFEPTLVEGKAIQLHPLVCTAFNADFDGDQMAVHVPLSLEAQLEARVLMMSTNNILHPANGAPIIVPSQDMVLGLYYLSILNQNEPGEGMAFSDLGELHHALESKVVTLHTKIRGRFKSVDEDGKPYSKIYETTPGRLLIGELLPKNGKVPFDICNQEMTKKNISKMIDTVYRHCGQKDTVIFCDRIMQLGFSHACRAGISFGKDDMVIPATKAKIVADTENLVKEYEQQYNDGLITQGEKYNKVVDAWGKATEKVAEEMMARIKAVEFDENTGRQKPMNSIYMMSHSGARGSPNQMRQLGGMRGLMAKPSGEIIETPIISNFKEGLTVNEYFNSTHGARKGLADTALKTANSGYLTRRLVDVAQDCIVTHVDCGTETGLTMTAIVDAGQVVASLGARILGRTALDDIDHPVTGERIVDAGKMILEPDVIEIEKAGIQSIRIRSALTCEIQTGVCSVCYGRDLARGTPVNMGEAVGVIAAQSIGEPGTQLTMRTFHLGGTATVVDQSFLEASYEGTVQIKNRNVLRNSEGSLVAMGRNMTVQILDERGVERSSQRVAYGSKLHVDEGDKVKRGQRLAEWDPYTRPMMTEVAGTVQFEDLVDGLSVLEATDESTGITKRQVIDWRSTPRGSDLKPAIVIKDASGNVAKLSRGGDARFLLSVDAILSVEPGTKVSQGDVLARSPLESAKTKDITGGLPRVAELFEARRPKDHAIIAEIDGTIRLGRDYKNKRRVIIEPAEDGVEPVEYLIPKGKPFHLQDGDYIEKGDYILDGNPAPHDILAIKGVEALASYLVNEIQEVYRLQGVVINDKHIEVIVRQMLQKVEITDAGDSTYIVGDNVDRIELEDVNDHLIEQGKKPASGEPVLLGITKASLQTPSFISAASFQETTKVLTEAAIAGKTDGLQGLKENVIVGRLIPAGTGGTMTQIRRIATSRDELILEERRKGTGAAVATPMLQDMAENAPAAE.

Residues C71, C73, C86, and C89 each contribute to the Zn(2+) site. Residues D462, D464, and D466 each contribute to the Mg(2+) site. The Zn(2+) site is built by C811, C885, C892, and C895.

It belongs to the RNA polymerase beta' chain family. The RNAP catalytic core consists of 2 alpha, 1 beta, 1 beta' and 1 omega subunit. When a sigma factor is associated with the core the holoenzyme is formed, which can initiate transcription. Mg(2+) serves as cofactor. It depends on Zn(2+) as a cofactor.

It catalyses the reaction RNA(n) + a ribonucleoside 5'-triphosphate = RNA(n+1) + diphosphate. Functionally, DNA-dependent RNA polymerase catalyzes the transcription of DNA into RNA using the four ribonucleoside triphosphates as substrates. This Rhizobium etli (strain ATCC 51251 / DSM 11541 / JCM 21823 / NBRC 15573 / CFN 42) protein is DNA-directed RNA polymerase subunit beta'.